The primary structure comprises 276 residues: NADPH-dependent 7-cyano-7-deazaguanine reductase (276 aa).

Isoleucine 83 to serine 85 lines the substrate pocket. An NADPH-binding site is contributed by serine 85–lysine 86. The active-site Thioimide intermediate is cysteine 184. Aspartate 191 acts as the Proton donor in catalysis. Histidine 223–glutamate 224 contacts substrate. Arginine 252–glycine 253 lines the NADPH pocket.

The protein belongs to the GTP cyclohydrolase I family. QueF type 2 subfamily. Homodimer.

It localises to the cytoplasm. The catalysed reaction is 7-aminomethyl-7-carbaguanine + 2 NADP(+) = 7-cyano-7-deazaguanine + 2 NADPH + 3 H(+). Its pathway is tRNA modification; tRNA-queuosine biosynthesis. In terms of biological role, catalyzes the NADPH-dependent reduction of 7-cyano-7-deazaguanine (preQ0) to 7-aminomethyl-7-deazaguanine (preQ1). This chain is NADPH-dependent 7-cyano-7-deazaguanine reductase, found in Pseudomonas syringae pv. syringae (strain B728a).